Consider the following 620-residue polypeptide: E3 ubiquitin-protein ligase DTX1 (620 aa).

2 consecutive WWE domains span residues 14–94 and 95–171; these read GLGF…PVRR and NFYD…RLRR. 3 disordered regions span residues 221 to 248, 262 to 313, and 361 to 391; these read SQRR…LAVR, PAAG…SIPP, and PPVS…KSKN. 2 stretches are compositionally biased toward pro residues: residues 227–241 and 268–280; these read PPAP…PGGP and EPAP…PRSP. The SH3-binding signature appears at 230-233; that stretch reads PPLP. A compositionally biased stretch (polar residues) spans 291–307; sequence QNNLNRPGPQRTTSVSA. The segment covering 379–389 has biased composition (basic residues); it reads RKTKKKHLKKS. Residues 411–472 form an RING-type zinc finger; it reads CTICMERLVT…DGSLQCPTCK (62 aa).

Belongs to the Deltex family. Homodimer. May form a heterodimer with other members of the Deltex family. Interacts with NOTCH1 via its N-terminal region and EIF3F, the interaction is required for NOTCH1 deubiquitination. Interacts with EP300. Forms a heterodimer with BBAP; the heterodimerization leading to an increase of in vitro ubiquitin ligase activity. Interacts with ITCH. Post-translationally, ubiquitinated; undergoes 'Lys-29'-linked polyubiquitination catalyzed by ITCH. As to expression, widely expressed. Strongly expressed in blood vessel. Also expressed in embryonic nervous system, pancreas, lung, adrenal gland, digestive tube and muscles. Expressed in MZB cells and developing B- and T-cells.

The protein resides in the cytoplasm. Its subcellular location is the nucleus. The catalysed reaction is S-ubiquitinyl-[E2 ubiquitin-conjugating enzyme]-L-cysteine + [acceptor protein]-L-lysine = [E2 ubiquitin-conjugating enzyme]-L-cysteine + N(6)-ubiquitinyl-[acceptor protein]-L-lysine.. Its pathway is protein modification; protein ubiquitination. Functions as a ubiquitin ligase protein in vivo, mediating ubiquitination and promoting degradation of MEKK1, suggesting that it may regulate the Notch pathway via some ubiquitin ligase activity. Regulator of Notch signaling, a signaling pathway involved in cell-cell communications that regulates a broad spectrum of cell-fate determinations. Mainly acts as a positive regulator of Notch, but it also acts as a negative regulator, depending on the developmental and cell context. Mediates the antineural activity of Notch, possibly by inhibiting the transcriptional activation mediated by MATCH1. Involved in neurogenesis, lymphogenesis and myogenesis, and may also be involved in MZB (Marginal zone B) cell differentiation. Promotes B-cell development at the expense of T-cell development, suggesting that it can antagonize NOTCH1. The chain is E3 ubiquitin-protein ligase DTX1 (DTX1) from Homo sapiens (Human).